The primary structure comprises 340 residues: MYG1 protein C27H6.8 (340 aa).

It belongs to the MYG1 family.

The chain is MYG1 protein C27H6.8 from Caenorhabditis elegans.